We begin with the raw amino-acid sequence, 415 residues long: 3-isopropylmalate dehydratase large subunit (415 aa).

Cysteine 297, cysteine 355, and cysteine 358 together coordinate [4Fe-4S] cluster.

This sequence belongs to the aconitase/IPM isomerase family. LeuC type 2 subfamily. As to quaternary structure, heterodimer of LeuC and LeuD. [4Fe-4S] cluster is required as a cofactor.

The catalysed reaction is (2R,3S)-3-isopropylmalate = (2S)-2-isopropylmalate. Its pathway is amino-acid biosynthesis; L-leucine biosynthesis; L-leucine from 3-methyl-2-oxobutanoate: step 2/4. Catalyzes the isomerization between 2-isopropylmalate and 3-isopropylmalate, via the formation of 2-isopropylmaleate. This Caldivirga maquilingensis (strain ATCC 700844 / DSM 13496 / JCM 10307 / IC-167) protein is 3-isopropylmalate dehydratase large subunit.